A 709-amino-acid chain; its full sequence is Elongation factor G (709 aa).

In terms of domain architecture, tr-type G spans 10–286; that stretch reads NKVRNIGIMA…AVVDFLPSPL (277 aa). GTP is bound by residues 19-26, 83-87, and 137-140; these read AHIDAGKT, DTPGH, and NKMD.

Belongs to the TRAFAC class translation factor GTPase superfamily. Classic translation factor GTPase family. EF-G/EF-2 subfamily.

Its subcellular location is the cytoplasm. Catalyzes the GTP-dependent ribosomal translocation step during translation elongation. During this step, the ribosome changes from the pre-translocational (PRE) to the post-translocational (POST) state as the newly formed A-site-bound peptidyl-tRNA and P-site-bound deacylated tRNA move to the P and E sites, respectively. Catalyzes the coordinated movement of the two tRNA molecules, the mRNA and conformational changes in the ribosome. In Corynebacterium glutamicum (strain R), this protein is Elongation factor G.